Reading from the N-terminus, the 292-residue chain is General transcription factor IIE subunit 2 (292 aa).

Met-1 is subject to N-acetylmethionine. The interval 17–64 (LSTPVVEKRAVPSESPSSSSSKKKKAKVEHGGSSGSKQNSDHNNGSFN) is disordered. The span at 51 to 63 (GSKQNSDHNNGSF) shows a compositional bias: polar residues. The residue at position 62 (Ser-62) is a Phosphoserine. The segment at residues 67 to 147 (ALSGSSGYKF…YAFKPKYNLK (81 aa)) is a DNA-binding region (TFIIE beta). Lys-75 is subject to N6-acetyllysine. Residues 245–277 (SMQESGPKKVASIQRRKKPASQKKRRFKTHNEH) form a disordered region. The segment covering 258–272 (QRRKKPASQKKRRFK) has biased composition (basic residues).

The protein belongs to the TFIIE beta subunit family. In terms of assembly, tetramer of two alpha and two beta chains. Interacts with FACT subunit SUPT16H. Interacts with ATF7IP. Interacts with SND1. Part of TBP-based Pol II pre-initiation complex (PIC), in which Pol II core assembles with general transcription factors and other specific initiation factors including GTF2E1, GTF2E2, GTF2F1, GTF2F2, TCEA1, ERCC2, ERCC3, GTF2H2, GTF2H3, GTF2H4, GTF2H5, GTF2A1, GTF2A2, GTF2B and TBP; this large multi-subunit PIC complex mediates DNA unwinding and targets Pol II core to the transcription start site where the first phosphodiester bond forms.

The protein resides in the nucleus. Its function is as follows. Recruits TFIIH to the initiation complex and stimulates the RNA polymerase II C-terminal domain kinase and DNA-dependent ATPase activities of TFIIH. Both TFIIH and TFIIE are required for promoter clearance by RNA polymerase. In Mus musculus (Mouse), this protein is General transcription factor IIE subunit 2 (Gtf2e2).